We begin with the raw amino-acid sequence, 696 residues long: Methionine--tRNA ligase (696 aa).

The 'HIGH' region motif lies at P12–H22. Zn(2+) contacts are provided by C143, C146, C156, and C159. The 'KMSKS' region signature appears at K330–S334. K333 contributes to the ATP binding site. Positions D593–R696 constitute a tRNA-binding domain.

This sequence belongs to the class-I aminoacyl-tRNA synthetase family. MetG type 1 subfamily. Homodimer. Requires Zn(2+) as cofactor.

The protein resides in the cytoplasm. The catalysed reaction is tRNA(Met) + L-methionine + ATP = L-methionyl-tRNA(Met) + AMP + diphosphate. In terms of biological role, is required not only for elongation of protein synthesis but also for the initiation of all mRNA translation through initiator tRNA(fMet) aminoacylation. In Xanthomonas campestris pv. campestris (strain 8004), this protein is Methionine--tRNA ligase.